A 525-amino-acid chain; its full sequence is MGKNTKAKKRAASLEVLASKSSPILEFVFDEPLIHVACHPEQPIVVCAIATGHVFCCKYDAKALKRILNKNEAKLAALENKDDQKRKRFWKLIKLKAEMDTYELEEGEETAAVELLWKTRRHKGSVRGMSFNNDGSKLYTIGIDNVLKKANSLTGKVMKKVTLPLSSEKNHYTKLVTSKTHPFLLLGDELGNIHVLNNDTLQLQNTIKSIHNGDAINDIFQFVGKSVYKFISLGQTTLAYWDSRESNESDASIPADDLDAKRKVYVSDDQEDEMICGSFVNPEDGDILVCGMGEGVLTVWKPKKNDLVDQVTRIPICKNESVDCVISSFQDDNCVYCGCSNGNVYKVNVKLGKVIEIRKHSSIDEVSFIDLDYEYRVLSAGMDKVKLWDIVDEDDDEEGKINESYSNSESDNDNGFDSDADSNSDSESVSSSDVDSASDDEENSKSESEANESDVEETLVGLSKDELLAELEKDLQSSDEDSKHYTKRTKSTQPKKLKKQKKELNNKQLRNLQKHEHGIRKFEGL.

WD repeat units follow at residues valine 28–asparagine 69, arginine 121–lysine 160, histidine 211–alanine 251, glutamine 270–glutamine 310, and arginine 358–glutamate 398. The segment at aspartate 396–leucine 525 is disordered. Over residues serine 410–serine 424 the composition is skewed to acidic residues. Residues aspartate 425 to aspartate 435 are compositionally biased toward low complexity. The span at serine 463–histidine 484 shows a compositional bias: basic and acidic residues. The span at tyrosine 485–lysine 501 shows a compositional bias: basic residues. The segment covering glutamine 513–leucine 525 has biased composition (basic and acidic residues).

Belongs to the WD repeat WDR55 family.

It localises to the nucleus. The protein resides in the nucleolus. This chain is WD repeat-containing protein JIP5 (JIP5), found in Kluyveromyces lactis (strain ATCC 8585 / CBS 2359 / DSM 70799 / NBRC 1267 / NRRL Y-1140 / WM37) (Yeast).